A 146-amino-acid chain; its full sequence is D-aminoacyl-tRNA deacylase (146 aa).

The Gly-cisPro motif, important for rejection of L-amino acids signature appears at 137 to 138; it reads GP.

The protein belongs to the DTD family. In terms of assembly, homodimer.

The protein localises to the cytoplasm. It carries out the reaction glycyl-tRNA(Ala) + H2O = tRNA(Ala) + glycine + H(+). The enzyme catalyses a D-aminoacyl-tRNA + H2O = a tRNA + a D-alpha-amino acid + H(+). Its function is as follows. An aminoacyl-tRNA editing enzyme that deacylates mischarged D-aminoacyl-tRNAs. Also deacylates mischarged glycyl-tRNA(Ala), protecting cells against glycine mischarging by AlaRS. Acts via tRNA-based rather than protein-based catalysis; rejects L-amino acids rather than detecting D-amino acids in the active site. By recycling D-aminoacyl-tRNA to D-amino acids and free tRNA molecules, this enzyme counteracts the toxicity associated with the formation of D-aminoacyl-tRNA entities in vivo and helps enforce protein L-homochirality. The polypeptide is D-aminoacyl-tRNA deacylase (Bacillus cereus (strain B4264)).